The sequence spans 433 residues: Homogentisate 1,2-dioxygenase (433 aa).

The Proton acceptor role is filled by His-288. Residues His-331 and Glu-337 each coordinate Fe cation. Positions 346 and 367 each coordinate homogentisate. A Fe cation-binding site is contributed by His-367.

It belongs to the homogentisate dioxygenase family. As to quaternary structure, hexamer; dimer of trimers. Fe cation is required as a cofactor.

It catalyses the reaction homogentisate + O2 = 4-maleylacetoacetate + H(+). The protein operates within amino-acid degradation; L-phenylalanine degradation; acetoacetate and fumarate from L-phenylalanine: step 4/6. Its function is as follows. Involved in the catabolism of homogentisate (2,5-dihydroxyphenylacetate or 2,5-OH-PhAc), a central intermediate in the degradation of phenylalanine and tyrosine. Catalyzes the oxidative ring cleavage of the aromatic ring of homogentisate to yield maleylacetoacetate. This chain is Homogentisate 1,2-dioxygenase, found in Pseudomonas putida (strain ATCC 700007 / DSM 6899 / JCM 31910 / BCRC 17059 / LMG 24140 / F1).